A 188-amino-acid chain; its full sequence is uncharacterized protein (188 aa).

The disordered stretch occupies residues 133 to 153 (PKGRPTMKLQYPKMPPKPKTR).

The protein belongs to the IS150/IS1296 orfA family.

This is an uncharacterized protein from Haemophilus influenzae (strain ATCC 51907 / DSM 11121 / KW20 / Rd).